The following is a 790-amino-acid chain: MNERSLRVLEYNKIIHMLEDKCTSSLGREKLKELKPISNFEQITTWQKETSEAQSILIHRGNIPLGGIHDVSQYLRRTEIGSYLDPGQLLQLKETLAAARRMKTFLKDDKKESTYPIIQELGNNISSLKHIEDKIELCIISETELSDNASPELRNIRRQISSKNDAIRNKLNSIITSASNQKYLQDPIITMRQDRYVVPVKQEHRGNIPGLIHDQSSSGATIFVEPMAVVELNNQLKELRLKEQVEIERILMEIAAMIAERSDDIKSNQIILKELDFIFAKGKLSVEMRAVEPVLNTNKKISIKNGRHPLLPSNKVVPNTMWLGEDFHTLVITGPNTGGKTVTLKTLGLLTLMAQSGLHVPADYGTKLAIFDQVFADIGDEQSIEQSLSTFSSHMTNIVNIMDNVTEQSLVLFDELGAGTDPTEGAALAMAILNSLREMGTVTVATTHYSELKQYALSTEGVENASVEFDVNTLSPTYKLLIGVPGKSNAFEISRKLGLSDFLIQRSKELLTREDIQFEDLLQNIEKNRSTAEKEKDEAARLRMETQKLREEYYEKKQQLQTQKEKLISDAKREAYKIVKQAKLDADEIVENLKTLRAELEEKEMNKKIEEARKNLSDQMGKLAENMGEKLVLKTNKKPPKNLKIGESVNILSLNQIGYVILPEDANGEVQLQVGIMKVNMHVSNLERIKEEKDTKKTGVGKIVKSKAENIKMEIDVRGQNLEEAMLNVDKYLDDAYIAGLTHVTIIHGVGTGVLSAGLKQMLKKHKHTKSFREGEYGEGGMGVTIVHLK.

Position 334–341 (334–341 (GPNTGGKT)) interacts with ATP. A Smr domain is found at 715 to 790 (IDVRGQNLEE…GMGVTIVHLK (76 aa)).

Belongs to the DNA mismatch repair MutS family. MutS2 subfamily. In terms of assembly, homodimer. Binds to stalled ribosomes, contacting rRNA.

Endonuclease that is involved in the suppression of homologous recombination and thus may have a key role in the control of bacterial genetic diversity. Functionally, acts as a ribosome collision sensor, splitting the ribosome into its 2 subunits. Detects stalled/collided 70S ribosomes which it binds and splits by an ATP-hydrolysis driven conformational change. Acts upstream of the ribosome quality control system (RQC), a ribosome-associated complex that mediates the extraction of incompletely synthesized nascent chains from stalled ribosomes and their subsequent degradation. Probably generates substrates for RQC. The sequence is that of Endonuclease MutS2 from Alkaliphilus oremlandii (strain OhILAs) (Clostridium oremlandii (strain OhILAs)).